The following is a 461-amino-acid chain: ATP synthase subunit beta (461 aa).

Gly-151–Thr-158 lines the ATP pocket.

This sequence belongs to the ATPase alpha/beta chains family. In terms of assembly, F-type ATPases have 2 components, CF(1) - the catalytic core - and CF(0) - the membrane proton channel. CF(1) has five subunits: alpha(3), beta(3), gamma(1), delta(1), epsilon(1). CF(0) has three main subunits: a(1), b(2) and c(9-12). The alpha and beta chains form an alternating ring which encloses part of the gamma chain. CF(1) is attached to CF(0) by a central stalk formed by the gamma and epsilon chains, while a peripheral stalk is formed by the delta and b chains.

It localises to the cell inner membrane. The enzyme catalyses ATP + H2O + 4 H(+)(in) = ADP + phosphate + 5 H(+)(out). Its function is as follows. Produces ATP from ADP in the presence of a proton gradient across the membrane. The catalytic sites are hosted primarily by the beta subunits. This is ATP synthase subunit beta from Idiomarina loihiensis (strain ATCC BAA-735 / DSM 15497 / L2-TR).